The sequence spans 200 residues: Phospholipase A2 inhibitor gamma subunit B (200 aa).

The first 19 residues, 1-19 (MKFLLFCCLFGTFLATGMC), serve as a signal peptide directing secretion. Intrachain disulfides connect Cys-22-Cys-46, Cys-25-Cys-32, Cys-39-Cys-67, Cys-73-Cys-94, Cys-95-Cys-100, Cys-120-Cys-145, Cys-138-Cys-165, and Cys-171-Cys-191. N-linked (GlcNAc...) asparagine glycosylation is present at Asn-31.

It belongs to the CNF-like-inhibitor family. As to quaternary structure, heterodimer of subunit A and subunit B. Post-translationally, N-glycosylated. In terms of tissue distribution, expressed by the liver. Not expressed in esophagus, stomach, pancreas, spleen, gall bladder, small intestine, rectum, kidney, trachea, lung, testis and body fat.

It is found in the secreted. In terms of biological role, inhibits the enzymatic activity of phospholipase A2 (PA2). The polypeptide is Phospholipase A2 inhibitor gamma subunit B (Elaphe quadrivirgata (Japanese four-lined ratsnake)).